A 232-amino-acid chain; its full sequence is Large ribosomal subunit protein uL1 (232 aa).

Belongs to the universal ribosomal protein uL1 family. In terms of assembly, part of the 50S ribosomal subunit.

In terms of biological role, binds directly to 23S rRNA. The L1 stalk is quite mobile in the ribosome, and is involved in E site tRNA release. Protein L1 is also a translational repressor protein, it controls the translation of the L11 operon by binding to its mRNA. The sequence is that of Large ribosomal subunit protein uL1 from Clostridium novyi (strain NT).